The following is a 144-amino-acid chain: Mannitol-specific phosphotransferase enzyme IIA component (144 aa).

Residues 3–142 (ELFSNDNIFL…EEIKQVFEEA (140 aa)) form the PTS EIIA type-2 domain. The active-site Tele-phosphohistidine intermediate is H63. H63 carries the post-translational modification Phosphohistidine; by HPr.

In terms of assembly, homodimer or homotrimer. Seems to be a monomer when not phosphorylated.

The protein resides in the cytoplasm. In terms of biological role, the phosphoenolpyruvate-dependent sugar phosphotransferase system (sugar PTS), a major carbohydrate active transport system, catalyzes the phosphorylation of incoming sugar substrates concomitantly with their translocation across the cell membrane. The enzyme II CmtAB PTS system is involved in D-mannitol transport. This Staphylococcus aureus (strain COL) protein is Mannitol-specific phosphotransferase enzyme IIA component (mtlF).